A 65-amino-acid polypeptide reads, in one-letter code: Trypsin inhibitor 1 (65 aa).

3 disulfides stabilise this stretch: Cys-39–Cys-56, Cys-46–Cys-58, and Cys-52–Cys-64.

Belongs to the protease inhibitor I7 (squash-type serine protease inhibitor) family.

The protein localises to the secreted. Inhibits trypsin. This is Trypsin inhibitor 1 from Trichosanthes kirilowii (Chinese snake gourd).